A 260-amino-acid polypeptide reads, in one-letter code: DNA repair protein RecO (260 aa).

It belongs to the RecO family.

Involved in DNA repair and RecF pathway recombination. The sequence is that of DNA repair protein RecO from Paracidovorax citrulli (strain AAC00-1) (Acidovorax citrulli).